Here is a 272-residue protein sequence, read N- to C-terminus: Glycerol-3-phosphate acyltransferase (272 aa).

Transmembrane regions (helical) follow at residues 9–29 (IIILFLFIGYFIGNILFGILI), 60–80 (AIVMVLDFFKSWFSTFVCLLI), 99–119 (VIIYLGGFAAIIGHCFPCFYF), 149–169 (ASISPWMFFICFVLFWSICLI), 173–193 (VSLASIVTVFLLPIWSLIPHL), and 226–246 (LNWWYILVTFLLELLTAVLVI).

Belongs to the PlsY family. In terms of assembly, probably interacts with PlsX.

It is found in the cell membrane. The enzyme catalyses an acyl phosphate + sn-glycerol 3-phosphate = a 1-acyl-sn-glycero-3-phosphate + phosphate. Its pathway is lipid metabolism; phospholipid metabolism. Catalyzes the transfer of an acyl group from acyl-phosphate (acyl-PO(4)) to glycerol-3-phosphate (G3P) to form lysophosphatidic acid (LPA). This enzyme utilizes acyl-phosphate as fatty acyl donor, but not acyl-CoA or acyl-ACP. In Malacoplasma penetrans (strain HF-2) (Mycoplasma penetrans), this protein is Glycerol-3-phosphate acyltransferase.